We begin with the raw amino-acid sequence, 319 residues long: Protein HEXIM1 (319 aa).

The segment covering 1–22 (MELIKEETAPEDDSRGRQRDCR) has biased composition (basic and acidic residues). Disordered regions lie at residues 1 to 111 (MELI…KKRR), 157 to 223 (LMEE…LQKD), 262 to 286 (NNWL…RVRE), and 299 to 319 (NELL…SQPS). The span at 24–35 (SVVSSKQVQRNQ) shows a compositional bias: polar residues. Residues 49 to 61 (PMCRDRSDPEPRT) show a composition bias toward basic and acidic residues. Positions 97–111 (GKKKHRRRPSKKKRR) are enriched in basic residues. A compositionally biased stretch (acidic residues) spans 185–202 (TASEDENFEAEEDDEEEG). A compositionally biased stretch (gly residues) spans 203-216 (GGGSDGMGRPGQAG). Residues 240–306 (SKQELVREYL…ENNELLLKTP (67 aa)) are a coiled coil. Over residues 306–319 (PASNEPGLNQSQPS) the composition is skewed to polar residues.

It belongs to the HEXIM family. In terms of assembly, homooligomer and heterooligomer. Core component of the 7SK RNP complex.

It is found in the nucleus. The protein resides in the cytoplasm. Functionally, transcriptional regulator which functions as a general RNA polymerase II transcription inhibitor. Core component of the 7SK RNP complex: in cooperation with 7SK snRNA sequesters P-TEFb in a large inactive 7SK snRNP complex preventing RNA polymerase II phosphorylation and subsequent transcriptional elongation. Plays a role in the regulation of DNA virus-mediated innate immune response by assembling into the HDP-RNP complex, a complex that serves as a platform for IRF3 phosphorylation and subsequent innate immune response activation through the cGAS-STING pathway. This chain is Protein HEXIM1 (hexim1), found in Danio rerio (Zebrafish).